We begin with the raw amino-acid sequence, 176 residues long: CDP-archaeol synthase (176 aa).

5 consecutive transmembrane segments (helical) span residues 12-32 (FIYW…SPVL), 60-80 (GFYV…IILC), 85-105 (ILIG…GSFI), 118-138 (PIID…FLGI), and 141-161 (FISY…LHII).

It belongs to the CDP-archaeol synthase family. It depends on Mg(2+) as a cofactor.

It localises to the cell membrane. It catalyses the reaction 2,3-bis-O-(geranylgeranyl)-sn-glycerol 1-phosphate + CTP + H(+) = CDP-2,3-bis-O-(geranylgeranyl)-sn-glycerol + diphosphate. Its pathway is membrane lipid metabolism; glycerophospholipid metabolism. Catalyzes the formation of CDP-2,3-bis-(O-geranylgeranyl)-sn-glycerol (CDP-archaeol) from 2,3-bis-(O-geranylgeranyl)-sn-glycerol 1-phosphate (DGGGP) and CTP. This reaction is the third ether-bond-formation step in the biosynthesis of archaeal membrane lipids. In Staphylothermus marinus (strain ATCC 43588 / DSM 3639 / JCM 9404 / F1), this protein is CDP-archaeol synthase.